Reading from the N-terminus, the 293-residue chain is Immediate early response gene 5-like protein (293 aa).

Belongs to the IER family.

The protein is Immediate early response gene 5-like protein (ier5l) of Xenopus laevis (African clawed frog).